The following is a 295-amino-acid chain: 33 kDa chaperonin (295 aa).

2 disulfide bridges follow: Cys237-Cys239 and Cys270-Cys273.

Belongs to the HSP33 family. Post-translationally, under oxidizing conditions two disulfide bonds are formed involving the reactive cysteines. Under reducing conditions zinc is bound to the reactive cysteines and the protein is inactive.

The protein resides in the cytoplasm. Functionally, redox regulated molecular chaperone. Protects both thermally unfolding and oxidatively damaged proteins from irreversible aggregation. Plays an important role in the bacterial defense system toward oxidative stress. This is 33 kDa chaperonin from Symbiobacterium thermophilum (strain DSM 24528 / JCM 14929 / IAM 14863 / T).